A 122-amino-acid polypeptide reads, in one-letter code: Large ribosomal subunit protein eL18 (122 aa).

Belongs to the eukaryotic ribosomal protein eL18 family.

This chain is Large ribosomal subunit protein eL18, found in Pyrobaculum aerophilum (strain ATCC 51768 / DSM 7523 / JCM 9630 / CIP 104966 / NBRC 100827 / IM2).